A 207-amino-acid polypeptide reads, in one-letter code: Adenylyl-sulfate kinase (207 aa).

39-46 (GLSGAGKS) serves as a coordination point for ATP. S113 serves as the catalytic Phosphoserine intermediate.

Belongs to the APS kinase family.

It carries out the reaction adenosine 5'-phosphosulfate + ATP = 3'-phosphoadenylyl sulfate + ADP + H(+). It participates in sulfur metabolism; hydrogen sulfide biosynthesis; sulfite from sulfate: step 2/3. Catalyzes the synthesis of activated sulfate. The chain is Adenylyl-sulfate kinase from Vibrio vulnificus (strain CMCP6).